Reading from the N-terminus, the 172-residue chain is Lytic chitin monooxygenase (172 aa).

The first 30 residues, 1–30, serve as a signal peptide directing secretion; that stretch reads MHAGRKTAVLIGAALAPVIAVSLPAASASA. H31 and H106 together coordinate Cu cation. The 138-residue stretch at 31-168 folds into the Chitin-binding type-4 domain; sequence HGYISNPPSR…DNAFYACIDV (138 aa).

The cofactor is Cu(2+).

It is found in the secreted. The enzyme catalyses [(1-&gt;4)-N-acetyl-beta-D-glucosaminyl]n+m + reduced acceptor + O2 = [(1-&gt;4)-N-acetyl-beta-D-glucosaminyl]m-1-(1-&gt;4)-2-(acetylamino)-2-deoxy-D-glucono-1,5-lactone + [(1-&gt;4)-N-acetyl-beta-D-glucosaminyl]n + acceptor + H2O.. It functions in the pathway glycan degradation; chitin degradation. In terms of biological role, involved in chitin degradation. Catalyzes the oxidative cleavage of glycosidic bonds in chitin via a copper-dependent mechanism, leading to oxidized chitooligomers with degrees of polymerization of 4-6. Is not active on cellulose. The chain is Lytic chitin monooxygenase from Streptomyces ambofaciens (strain ATCC 23877 / 3486 / DSM 40053 / JCM 4204 / NBRC 12836 / NRRL B-2516).